The primary structure comprises 160 residues: Transcriptional regulator MraZ (160 aa).

2 SpoVT-AbrB domains span residues K5–Y50 and A93–E136.

It belongs to the MraZ family. As to quaternary structure, forms oligomers.

It is found in the cytoplasm. It localises to the nucleoid. The chain is Transcriptional regulator MraZ from Geotalea uraniireducens (strain Rf4) (Geobacter uraniireducens).